A 357-amino-acid chain; its full sequence is UDP-xylose transporter 3 (357 aa).

10 helical membrane-spanning segments follow: residues 7–27, 31–51, 75–95, 100–120, 132–152, 154–174, 194–214, 224–244, 250–270, and 280–300; these read FQLGTIGALSLSVVSSVSIVI, ALISTLGFTFATTLTSWHLLV, VMGFGILNGISIGLLNLSLGF, FYQMTKLAIIPCTVLLETLFF, LTILLLGVGIATVTDLQLNML, SVLSLLAVVTTCVAQIMTNTI, AITLFVTGPFLDGLLTNQNVF, FFIVLSCLISVSVNFSTFLVI, VTYQVLGHLKTCLVLAFGYVL, and ILGILVAVIGMVVYSYYCSIE. Residue Ser-334 is modified to Phosphoserine.

Belongs to the TPT transporter family. TPT (TC 2.A.7.9) subfamily. As to expression, ubiquitous.

The protein localises to the golgi apparatus membrane. Its function is as follows. Nucleotide-sugar transporter that transports UDP-xylose and UMP in a strict counter-exchange mode. The chain is UDP-xylose transporter 3 from Arabidopsis thaliana (Mouse-ear cress).